A 490-amino-acid polypeptide reads, in one-letter code: Bifunctional dihydrocamalexate synthase/camalexin synthase (490 aa).

A helical membrane pass occupies residues 1-21; that stretch reads MSVFLCFLVLLPLILIFLNVL.

The protein belongs to the cytochrome P450 family.

The protein localises to the membrane. The catalysed reaction is 2-(L-cystein-S-yl)-2-(1H-indol-3-yl)-acetonitrile + 2 reduced [NADPH--hemoprotein reductase] + 2 O2 = camalexin + hydrogen cyanide + 2 oxidized [NADPH--hemoprotein reductase] + CO2 + 4 H2O + 2 H(+). The enzyme catalyses 2-(L-cystein-S-yl)-2-(1H-indol-3-yl)-acetonitrile + reduced [NADPH--hemoprotein reductase] + O2 = (R)-dihydrocamalexate + hydrogen cyanide + oxidized [NADPH--hemoprotein reductase] + 2 H2O + 2 H(+). It catalyses the reaction (R)-dihydrocamalexate + reduced [NADPH--hemoprotein reductase] + O2 = camalexin + oxidized [NADPH--hemoprotein reductase] + CO2 + 2 H2O. In terms of biological role, multifunctional enzyme involved in the biosynthesis of the indole-derived phytoalexin camalexin. Catalyzes two reactions, the formation of dihydrocamalexate from indole-3-acetonitrile-cysteine conjugate and the oxidative decarboxylation of dihydrocamalexate which is the final step in camalexin biosynthesis. Required for the resistance to the fungal pathogens A.brassicicola, B.cinerea, B.elliptica, B.tulipae, L.maculans and Colletotrichum higginsianum. Seems not to be required for resistance to P.syringae, P.porri, and not involved in age-related resistance. In Arabidopsis thaliana (Mouse-ear cress), this protein is Bifunctional dihydrocamalexate synthase/camalexin synthase (CYP71B15).